The primary structure comprises 322 residues: RNA-binding protein KhpB (322 aa).

Positions Val3–Thr52 are jag_N domain. Positions Ala58–Ala82 are enriched in low complexity. The tract at residues Ala58–Thr162 is disordered. Position 89 is a phosphothreonine (Thr89). Over residues Thr89 to Arg99 the composition is skewed to polar residues. Residues Gln100–Val129 are compositionally biased toward low complexity. Polar residues predominate over residues Ser141–Arg161. Residues Glu174 to Val251 enclose the KH domain. Positions Glu256–Lys322 constitute an R3H domain.

In terms of assembly, forms a complex with KhpA.

It is found in the cytoplasm. Its function is as follows. A probable RNA chaperone. Forms a complex with KhpA which binds to cellular RNA and controls its expression. Plays a role in peptidoglycan (PG) homeostasis and cell length regulation. In terms of biological role, necessary for correct cell elongation. The protein is RNA-binding protein KhpB of Lactiplantibacillus plantarum (strain ATCC BAA-793 / NCIMB 8826 / WCFS1) (Lactobacillus plantarum).